A 129-amino-acid polypeptide reads, in one-letter code: Transcription antitermination protein NusB (129 aa).

Belongs to the NusB family.

Involved in transcription antitermination. Required for transcription of ribosomal RNA (rRNA) genes. Binds specifically to the boxA antiterminator sequence of the ribosomal RNA (rrn) operons. The polypeptide is Transcription antitermination protein NusB (Staphylococcus aureus (strain bovine RF122 / ET3-1)).